We begin with the raw amino-acid sequence, 377 residues long: NAC domain-containing protein 76 (377 aa).

Residues 10–159 form the NAC domain; sequence VPPGFRFHPT…GWVVCRAFKK (150 aa). A DNA-binding region spans residues 110 to 165; it reads IGMRKTLVFYKGRAPNGQKTDWIMHEYRLESDENAPPQEEGWVVCRAFKKKPMTGQ. Positions 312-347 are disordered; sequence GVSGFGGHHEEDNNKIGHYNNEESNNKGSVETASST. Residues 318-336 are compositionally biased toward basic and acidic residues; that stretch reads GHHEEDNNKIGHYNNEESN. Polar residues predominate over residues 337–347; sequence NKGSVETASST.

It belongs to the plant vascular related NAC-domain protein family. As to quaternary structure, interacts with NAC030/VND7. Detected in root protoxylem and metaxylem poles and in vessels of protoxylems, outermost metaxylems, inner metaxylems, shoots and hypocotyls. Expressed in roots, hypocotyls, cotyledons and leaves. Present in developing xylems. Specifically expressed in vessels but not in interfascicular fibers in stems.

Its subcellular location is the nucleus. Functionally, transcription activator that binds to the secondary wall NAC binding element (SNBE), 5'-(T/A)NN(C/T)(T/C/G)TNNNNNNNA(A/C)GN(A/C/T)(A/T)-3', in the promoter of target genes. Involved in xylem formation by promoting the expression of secondary wall-associated transcription factors and of genes involved in secondary wall biosynthesis and programmed cell death, genes driven by the secondary wall NAC binding element (SNBE). Triggers thickening of secondary walls. The polypeptide is NAC domain-containing protein 76 (Arabidopsis thaliana (Mouse-ear cress)).